The chain runs to 323 residues: MADKQISLPAKLINGGIAGLIGVTCVFPIDLAKTRLQNQQNGQRVYTSMSDCLIKTVRSEGYFGMYRGAAVNLTLVTPEKAIKLAANDFFRHQLSKDGQKLTLLKEMLAGCGAGTCQVIVTTPMEMLKIQLQDAGRIAAQRKILAAQGQLSAQGGAQPSVEAPAAPRPTATQLTRDLLRSRGIAGLYKGLGATLLRDVPFSVVYFPLFANLNQLGRPASEEKSPFYVSFLAGCVAGSAAAVAVNPCDVVKTRLQSLQRGVNEDTYSGILDCARKILRHEGPSAFLKGAYCRALVIAPLFGIAQVVYFLGIAESLLGLLQDPQA.

3 Solcar repeats span residues 6–93 (ISLP…FRHQ), 101–214 (LTLL…LNQL), and 223–312 (SPFY…GIAE). 6 helical membrane-spanning segments follow: residues 12–32 (LING…IDLA), 62–82 (YFGM…EKAI), 107–127 (MLAG…MEML), 189–209 (GLGA…PLFA), 223–243 (SPFY…AVAV), and 292–312 (ALVI…GIAE).

Belongs to the mitochondrial carrier (TC 2.A.29) family. In terms of tissue distribution, expressed at high levels in brain, liver, and pancreas.

The protein resides in the mitochondrion inner membrane. It carries out the reaction L-glutamate(in) + H(+)(in) = L-glutamate(out) + H(+)(out). Its function is as follows. Mitochondrial glutamate/H(+) symporter. Responsible for the transport of glutamate from the cytosol into the mitochondrial matrix with the concomitant import of a proton. Plays a role in the control of glucose-stimulated insulin secretion. The sequence is that of Mitochondrial glutamate carrier 1 from Homo sapiens (Human).